The chain runs to 365 residues: Chorismate synthase (365 aa).

Arginine 48 is an NADP(+) binding site. FMN is bound by residues 125–127 (RGS), glycine 286, 301–305 (KPTPS), and arginine 328.

It belongs to the chorismate synthase family. Requires FMNH2 as cofactor.

It catalyses the reaction 5-O-(1-carboxyvinyl)-3-phosphoshikimate = chorismate + phosphate. It participates in metabolic intermediate biosynthesis; chorismate biosynthesis; chorismate from D-erythrose 4-phosphate and phosphoenolpyruvate: step 7/7. In terms of biological role, catalyzes the anti-1,4-elimination of the C-3 phosphate and the C-6 proR hydrogen from 5-enolpyruvylshikimate-3-phosphate (EPSP) to yield chorismate, which is the branch point compound that serves as the starting substrate for the three terminal pathways of aromatic amino acid biosynthesis. This reaction introduces a second double bond into the aromatic ring system. This chain is Chorismate synthase, found in Methanosphaera stadtmanae (strain ATCC 43021 / DSM 3091 / JCM 11832 / MCB-3).